Reading from the N-terminus, the 196-residue chain is Pyridoxal 5'-phosphate synthase subunit PdxT (196 aa).

An L-glutamine-binding site is contributed by 46–48; that stretch reads GES. The active-site Nucleophile is the Cys78. L-glutamine is bound by residues Arg105 and 134–135; that span reads IR. Active-site charge relay system residues include His170 and Glu172.

It belongs to the glutaminase PdxT/SNO family. In the presence of PdxS, forms a dodecamer of heterodimers. Only shows activity in the heterodimer.

The catalysed reaction is aldehydo-D-ribose 5-phosphate + D-glyceraldehyde 3-phosphate + L-glutamine = pyridoxal 5'-phosphate + L-glutamate + phosphate + 3 H2O + H(+). The enzyme catalyses L-glutamine + H2O = L-glutamate + NH4(+). Its pathway is cofactor biosynthesis; pyridoxal 5'-phosphate biosynthesis. Its function is as follows. Catalyzes the hydrolysis of glutamine to glutamate and ammonia as part of the biosynthesis of pyridoxal 5'-phosphate. The resulting ammonia molecule is channeled to the active site of PdxS. This is Pyridoxal 5'-phosphate synthase subunit PdxT from Pelotomaculum thermopropionicum (strain DSM 13744 / JCM 10971 / SI).